Reading from the N-terminus, the 189-residue chain is HGPRTase-like protein 1 (189 aa).

Belongs to the purine/pyrimidine phosphoribosyltransferase family. Archaeal HPRT subfamily.

May catalyze a purine salvage reaction, the substrate is unknown. The polypeptide is HGPRTase-like protein 1 (Natrialba magadii (strain ATCC 43099 / DSM 3394 / CCM 3739 / CIP 104546 / IAM 13178 / JCM 8861 / NBRC 102185 / NCIMB 2190 / MS3) (Natronobacterium magadii)).